The following is a 118-amino-acid chain: Aspartate 1-decarboxylase (118 aa).

Ser25 functions as the Schiff-base intermediate with substrate; via pyruvic acid in the catalytic mechanism. Pyruvic acid (Ser) is present on Ser25. Residue Thr57 coordinates substrate. Residue Tyr58 is the Proton donor of the active site. 73–75 (GAA) is a binding site for substrate.

It belongs to the PanD family. Heterooctamer of four alpha and four beta subunits. Pyruvate is required as a cofactor. In terms of processing, is synthesized initially as an inactive proenzyme, which is activated by self-cleavage at a specific serine bond to produce a beta-subunit with a hydroxyl group at its C-terminus and an alpha-subunit with a pyruvoyl group at its N-terminus.

Its subcellular location is the cytoplasm. It carries out the reaction L-aspartate + H(+) = beta-alanine + CO2. The protein operates within cofactor biosynthesis; (R)-pantothenate biosynthesis; beta-alanine from L-aspartate: step 1/1. Its function is as follows. Catalyzes the pyruvoyl-dependent decarboxylation of aspartate to produce beta-alanine. The polypeptide is Aspartate 1-decarboxylase (Caulobacter vibrioides (strain ATCC 19089 / CIP 103742 / CB 15) (Caulobacter crescentus)).